A 116-amino-acid chain; its full sequence is Large ribosomal subunit protein bL17 (116 aa).

Belongs to the bacterial ribosomal protein bL17 family. In terms of assembly, part of the 50S ribosomal subunit. Contacts protein L32.

The protein is Large ribosomal subunit protein bL17 of Synechococcus sp. (strain CC9311).